The chain runs to 1101 residues: Type II inositol polyphosphate 5-phosphatase 15 (1101 aa).

Over residues 31-40 (RSAYSSSSSS) the composition is skewed to low complexity. The disordered stretch occupies residues 31–54 (RSAYSSSSSSGDDESQPSVDDSNK). 6 WD repeats span residues 121-162 (LRET…GSGR), 180-219 (FGSA…GIEE), 225-263 (AHRG…GKSL), 403-432 (DDSR…MRWD), 433-481 (GNGN…GGWV), and 483-519 (HSGP…PLDN). 2 catalytic regions span residues 749–765 (DMVI…DDIT) and 828–843 (KKRI…YRDN). A Glycyl lysine isopeptide (Lys-Gly) (interchain with G-Cter in ubiquitin) cross-link involves residue lysine 907.

This sequence belongs to the inositol polyphosphate 5-phosphatase family. Requires Mg(2+) as cofactor. Predominantly expressed in interfascicular fibers and vascular bundles. Expressed in seedlings, stems, roots and flowers. Expressed at lower level in mature leaves.

The catalysed reaction is a 1,2-diacyl-sn-glycero-3-phospho-(1D-myo-inositol-4,5-bisphosphate) + H2O = a 1,2-diacyl-sn-glycero-3-phospho-(1D-myo-inositol 4-phosphate) + phosphate. The enzyme catalyses a 1,2-diacyl-sn-glycero-3-phospho-(1D-myo-inositol-3,4,5-trisphosphate) + H2O = a 1,2-diacyl-sn-glycero-3-phospho-(1D-myo-inositol-3,4-bisphosphate) + phosphate. It carries out the reaction 1D-myo-inositol 1,4,5-trisphosphate + H2O = 1D-myo-inositol 1,4-bisphosphate + phosphate. Functionally, has phosphatase activity toward PtdIns(4,5)P2, PtdIns(3,4,5)P3 and Ins(1,4,5)P3. Has a higher substrate affinity toward PtdIns(4,5)P2. Required for secondary wall synthesis and actin organization in fiber cells. This Arabidopsis thaliana (Mouse-ear cress) protein is Type II inositol polyphosphate 5-phosphatase 15.